We begin with the raw amino-acid sequence, 412 residues long: Interferon-inducible GTPase 5 (412 aa).

Residues 51-234 enclose the IRG-type G domain; sequence TRLEVGVTGE…PMLVTTWEHD (184 aa). GTP-binding positions include 60–67, 85–89, and 215–217; these read ESGAGKSS, TGVVE, and SNL. Serine 246 and serine 303 each carry phosphoserine.

This sequence belongs to the TRAFAC class dynamin-like GTPase superfamily. IRG family. Interacts with PLIN2/ADRP and COX4I1/COXIV. In terms of tissue distribution, expressed in spermatozoa tails from the testis and epididymis, where it may be a component of the fibrous sheath (at protein level).

It localises to the cell projection. The protein resides in the cilium. The protein localises to the flagellum. Its subcellular location is the lipid droplet. The enzyme catalyses GTP + H2O = GDP + phosphate + H(+). Required for sperm motility and therefore male fertility, via positive regulation of spermatozoa fibrous sheath formation. This chain is Interferon-inducible GTPase 5, found in Mus musculus (Mouse).